The primary structure comprises 1658 residues: Collagen alpha-1(XXVII) chain B (1658 aa).

An N-terminal signal peptide occupies residues 1-38; it reads MEPDNTPSSRLRAAGVGGRAVFFCMVLYCTCCLRLAQA. The Laminin G-like domain maps to 66 to 229; it reads GVILTTRARI…NYCKYIKKQC (164 aa). Positions 308–323 are enriched in polar residues; the sequence is SIRNRTSQISPKPTQQ. 6 disordered regions span residues 308–332, 345–364, 427–550, 571–614, 637–1332, and 1377–1415; these read SIRN…KKER, VTDS…TTTT, GLKG…GNMG, GERG…APGP, GPKG…DAGE, and IIGP…GPPG. The segment at 424–1417 is triple-helical region; it reads ELTGLKGEPG…RGPPGPPGLP (994 aa). Collagen-like domains follow at residues 425 to 478, 493 to 552, 556 to 615, 622 to 681, 685 to 744, 748 to 807, and 811 to 870; these read LTGL…GNPG, GLVG…MGPK, GFIG…PGPV, GDMG…PGLP, GKPG…PGLE, GPVG…MGLA, and GDRG…RGPD. Residues 434-444 show a composition bias toward pro residues; it reads LPGPPGPPGQP. A compositionally biased stretch (low complexity) spans 491 to 506; sequence DPGLVGLPGQPGQPGR. Low complexity-rich tracts occupy residues 657–666 and 678–692; these read LGLPGEPGEP and PGLP…PQGK. Residues 733 to 742 are compositionally biased toward gly residues; the sequence is GIPGPGGLPG. 2 stretches are compositionally biased toward low complexity: residues 837–852 and 875–890; these read RGLS…HGSR and EKGM…PPGK. Collagen-like domains are found at residues 892–951, 952–1011, 1024–1083, 1084–1137, 1139–1198, 1199–1258, 1268–1327, and 1361–1420; these read GLSG…IGLP, GKAG…VGLE, GTEG…IGPK, GSRG…DGKV, GPPG…KGSK, GNKG…PGDL, GKPG…KGQP, and GPQG…PAVA. Basic and acidic residues predominate over residues 1040 to 1058; that stretch reads PEGKPGKIGERGKPGEKGS. A compositionally biased stretch (low complexity) spans 1112–1124; the sequence is HQGPQGSLGSPGP. The segment covering 1125–1137 has biased composition (basic and acidic residues); the sequence is KGEKGEQGDDGKV. The span at 1215–1230 shows a compositional bias: low complexity; sequence NRGSPGPVGVPGPRGV. The segment covering 1307–1316 has biased composition (gly residues); that stretch reads GLNGGMGFPG. Positions 1402–1415 are enriched in pro residues; it reads RGPPGPRGPPGPPG. Residues 1421-1658 constitute a propeptide, C-terminal propeptide; the sequence is FSHENEALGA…HLEVGPVCFL (238 aa). A Fibrillar collagen NC1 domain is found at 1458–1658; it reads SEIFKTLHYL…HLEVGPVCFL (201 aa). Disulfide bonds link Cys-1488/Cys-1520, Cys-1529/Cys-1656, and Cys-1565/Cys-1609. Ca(2+) is bound by residues Asp-1506, Asn-1508, Cys-1511, and Asp-1514. Residue Asn-1567 is glycosylated (N-linked (GlcNAc...) asparagine).

It belongs to the fibrillar collagen family. In terms of tissue distribution, weakly expressed in the notochord from the 6 somite stage. Expressed throughout the notochord at 13 somites, then becomes restricted to the distal tip of the notochord by 24 hpf. Also expressed in head cartilages by 48 hpf.

The protein localises to the secreted. It is found in the extracellular space. The protein resides in the extracellular matrix. Its function is as follows. May play a role during the calcification of cartilage and the transition of cartilage to bone. Together with col27a1a, plays a role in development of the notochord and axial skeleton. In Danio rerio (Zebrafish), this protein is Collagen alpha-1(XXVII) chain B (col27a1b).